Consider the following 561-residue polypeptide: Glucose-6-phosphate isomerase (561 aa).

Residues 171–172 (GS), 222–227 (SKTFTT), Gln366, Glu370, His401, and Lys525 each bind D-glucose 6-phosphate. The Proton donor role is filled by Glu370. Residues His401 and Lys525 contribute to the active site.

This sequence belongs to the GPI family. In terms of assembly, homodimer.

The protein localises to the cytoplasm. Its subcellular location is the cytosol. It catalyses the reaction alpha-D-glucose 6-phosphate = beta-D-fructose 6-phosphate. The protein operates within carbohydrate degradation; glycolysis; D-glyceraldehyde 3-phosphate and glycerone phosphate from D-glucose: step 2/4. Functionally, in the cytoplasm, catalyzes the conversion of glucose-6-phosphate to fructose-6-phosphate, the second step in glycolysis, and the reverse reaction during gluconeogenesis. The polypeptide is Glucose-6-phosphate isomerase (pgi-1) (Neurospora crassa (strain ATCC 24698 / 74-OR23-1A / CBS 708.71 / DSM 1257 / FGSC 987)).